The sequence spans 116 residues: Large ribosomal subunit protein uL18 (116 aa).

It belongs to the universal ribosomal protein uL18 family. In terms of assembly, part of the 50S ribosomal subunit; part of the 5S rRNA/L5/L18/L25 subcomplex. Contacts the 5S and 23S rRNAs.

Its function is as follows. This is one of the proteins that bind and probably mediate the attachment of the 5S RNA into the large ribosomal subunit, where it forms part of the central protuberance. This chain is Large ribosomal subunit protein uL18, found in Pseudomonas putida (strain W619).